The sequence spans 414 residues: WD repeat-containing protein jip5 (414 aa).

WD repeat units lie at residues 9–48, 73–112, 118–159, 222–263, and 319–356; these read PLSADLFSQAIHPNEPVVSVGLSTGHVQTFRLPSEESSDD, RHKGSCRCLGFGVDGEMLYSAGTDGLVKAAKAETGVVENK, AKDG…SNVS, VSSV…DQDE, and DETEGVIGLGFDVEGRMVSGGGQVVKVWHEAVGSNDMD. A disordered region spans residues 39-65; it reads RLPSEESSDDDDGTASNSSARNGKGHI. The segment at 357–414 is disordered; that stretch reads VDMAGGKRMFGGDSDDSDDDNDSEDSEQEQRQPVEPQRKRKKNKGKGKRDIIAFADID. The segment covering 369 to 383 has biased composition (acidic residues); it reads DSDDSDDDNDSEDSE. Positions 394–403 are enriched in basic residues; sequence RKRKKNKGKG.

The protein belongs to the WD repeat WDR55 family.

The protein localises to the nucleus. It is found in the nucleolus. The protein is WD repeat-containing protein jip5 (jip5) of Aspergillus clavatus (strain ATCC 1007 / CBS 513.65 / DSM 816 / NCTC 3887 / NRRL 1 / QM 1276 / 107).